The sequence spans 251 residues: MyoD family inhibitor (251 aa).

Disordered regions lie at residues 1–64, 84–167, and 230–251; these read MSQV…PHDS, VTCQ…APAV, and RPKQ…GKEF. The segment covering 84 to 94 has biased composition (polar residues); sequence VTCQPQGNPQG. Positions 138 to 154 are enriched in low complexity; the sequence is GSQAGRKSRGSARSASQ.

It belongs to the MDFI family. In terms of assembly, interacts (via C-terminus) with AXIN1 and LEF1. Interacts with CCNT2. Interacts (via C-terminus) with Piezo channel composed of PIEZO1 or PIEZO2; the interaction prolongs Piezo channel inactivation. In the embryo, highly expressed in the sclerotome. Also expressed in the notochord, neural tube, limb buds, heart, branchial arches and head mesenchyme. In the adult, highly expressed in skeletal muscle. Expressed at lower levels in most other tissues.

It is found in the nucleus. It localises to the cytoplasm. Inhibits the transactivation activity of the Myod family of myogenic factors and represses myogenesis. Acts by associating with Myod family members and retaining them in the cytoplasm by masking their nuclear localization signals. Can also interfere with the DNA-binding activity of Myod family members. Plays an important role in trophoblast and chondrogenic differentiation. Regulates the transcriptional activity of TCF7L1/TCF3 by interacting directly with Tcf7l1/Tcf3 and preventing it from binding DNA. Binds to the axin complex, resulting in an increase in the level of free beta-catenin. Affects axin regulation of the WNT and JNK signaling pathways. Regulates the activity of mechanosensitive Piezo channel. The sequence is that of MyoD family inhibitor (Mdfi) from Mus musculus (Mouse).